The chain runs to 76 residues: uncharacterized protein (76 aa).

This is an uncharacterized protein from Saccharomyces cerevisiae (strain ATCC 204508 / S288c) (Baker's yeast).